An 86-amino-acid chain; its full sequence is Cell division topological specificity factor (86 aa).

It belongs to the MinE family.

In terms of biological role, prevents the cell division inhibition by proteins MinC and MinD at internal division sites while permitting inhibition at polar sites. This ensures cell division at the proper site by restricting the formation of a division septum at the midpoint of the long axis of the cell. In Shewanella woodyi (strain ATCC 51908 / MS32), this protein is Cell division topological specificity factor.